A 143-amino-acid polypeptide reads, in one-letter code: Aspartate 1-decarboxylase (143 aa).

Serine 25 functions as the Schiff-base intermediate with substrate; via pyruvic acid in the catalytic mechanism. Serine 25 is subject to Pyruvic acid (Ser). A substrate-binding site is contributed by threonine 57. Catalysis depends on tyrosine 58, which acts as the Proton donor. 73–75 is a binding site for substrate; that stretch reads GAA.

It belongs to the PanD family. As to quaternary structure, heterooctamer of four alpha and four beta subunits. It depends on pyruvate as a cofactor. Is synthesized initially as an inactive proenzyme, which is activated by self-cleavage at a specific serine bond to produce a beta-subunit with a hydroxyl group at its C-terminus and an alpha-subunit with a pyruvoyl group at its N-terminus.

It localises to the cytoplasm. The enzyme catalyses L-aspartate + H(+) = beta-alanine + CO2. It participates in cofactor biosynthesis; (R)-pantothenate biosynthesis; beta-alanine from L-aspartate: step 1/1. Its function is as follows. Catalyzes the pyruvoyl-dependent decarboxylation of aspartate to produce beta-alanine. The chain is Aspartate 1-decarboxylase from Mycobacterium ulcerans (strain Agy99).